Consider the following 252-residue polypeptide: tRNA-cytidine(32) 2-sulfurtransferase (252 aa).

Residues 37-42 carry the PP-loop motif motif; it reads SGGKDS. [4Fe-4S] cluster contacts are provided by cysteine 112, cysteine 115, and cysteine 202.

The protein belongs to the TtcA family. As to quaternary structure, homodimer. Requires Mg(2+) as cofactor. It depends on [4Fe-4S] cluster as a cofactor.

The protein resides in the cytoplasm. The catalysed reaction is cytidine(32) in tRNA + S-sulfanyl-L-cysteinyl-[cysteine desulfurase] + AH2 + ATP = 2-thiocytidine(32) in tRNA + L-cysteinyl-[cysteine desulfurase] + A + AMP + diphosphate + H(+). The protein operates within tRNA modification. Functionally, catalyzes the ATP-dependent 2-thiolation of cytidine in position 32 of tRNA, to form 2-thiocytidine (s(2)C32). The sulfur atoms are provided by the cysteine/cysteine desulfurase (IscS) system. The chain is tRNA-cytidine(32) 2-sulfurtransferase from Geotalea daltonii (strain DSM 22248 / JCM 15807 / FRC-32) (Geobacter daltonii).